The following is a 273-amino-acid chain: Undecaprenyl-diphosphatase (273 aa).

Helical transmembrane passes span 13–35, 45–62, 82–102, 108–128, 186–206, 219–239, and 250–270; these read GLVEGFTEFLPISSTGHLIVFGN, VFEIAIQLGAVLAVVFEY, FVLNLAIAFIPAAVMGLLFDK, LFNPLSVAVMLVLGGFFILWV, TEFSFFLAVPMMVAATAYDVL, LILIGFIAAFVSGLVAVKALL, and FAYYRIVFGIVIIILWLSGWI.

The protein belongs to the UppP family.

It is found in the cell inner membrane. It carries out the reaction di-trans,octa-cis-undecaprenyl diphosphate + H2O = di-trans,octa-cis-undecaprenyl phosphate + phosphate + H(+). Its function is as follows. Catalyzes the dephosphorylation of undecaprenyl diphosphate (UPP). Confers resistance to bacitracin. This is Undecaprenyl-diphosphatase from Neisseria gonorrhoeae (strain ATCC 700825 / FA 1090).